We begin with the raw amino-acid sequence, 216 residues long: 1-Cys peroxiredoxin PER1 (216 aa).

In terms of domain architecture, Thioredoxin spans Ile-4–Met-159. The active-site Cysteine sulfenic acid (-SOH) intermediate is the Cys-46. Positions Lys-191–Glu-214 match the Bipartite nuclear localization signal motif.

The protein belongs to the peroxiredoxin family. Prx6 subfamily. As to expression, predominantly expressed in seed. Expressed in endosperm, embryo and aleurone cells. Also detected in young seedlings, abscission zones, stem branching points.

The protein localises to the nucleus. The protein resides in the cytoplasm. It catalyses the reaction a hydroperoxide + [thioredoxin]-dithiol = an alcohol + [thioredoxin]-disulfide + H2O. In terms of biological role, thiol-specific peroxidase that catalyzes the reduction of hydrogen peroxide and organic hydroperoxides to water and alcohols, respectively. Seems to contribute to the inhibition of germination during stress. The protein is 1-Cys peroxiredoxin PER1 (PER1) of Arabidopsis thaliana (Mouse-ear cress).